The following is a 533-amino-acid chain: UDP-glucuronosyltransferase 1A1 (533 aa).

An N-terminal signal peptide occupies residues 1–25 (MAVESQGGRPLVLGLLLCVLGPVVS). N-linked (GlcNAc...) asparagine glycosylation is found at Asn-102, Asn-295, and Asn-347. The chain crosses the membrane as a helical span at residues 491 to 507 (VIGFLLAVVLTVAFITF).

This sequence belongs to the UDP-glycosyltransferase family. Homodimer. Homooligomer. Interacts with UGT1A3, UGT1A4, UGT1A6, UGT1A7, UGT1A8, UGT1A9 and UGT1A10 to form heterodimers. Isoform 1 interacts with isoform 2/i2 suggesting that oligomerization is involved in negative regulation of transferase activity by isoform 2. Isoform 1 also interacts with respective i2 isoforms of UGT1A3, UGT1A4, UGT1A6, UGT1A7, UGT1A8, UGT1A9 and UGT1A10. As to expression, expressed in liver, colon and small intestine. Not expressed in kidney, esophagus and skin. In terms of tissue distribution, expressed in liver, colon, small intestine and kidney. Not expressed in esophagus and skin.

The protein resides in the endoplasmic reticulum membrane. The protein localises to the cytoplasm. It is found in the perinuclear region. The enzyme catalyses glucuronate acceptor + UDP-alpha-D-glucuronate = acceptor beta-D-glucuronoside + UDP + H(+). The catalysed reaction is 17beta-estradiol + UDP-alpha-D-glucuronate = 17beta-estradiol 3-O-(beta-D-glucuronate) + UDP + H(+). It catalyses the reaction 2-hydroxyestrone + UDP-alpha-D-glucuronate = 2-hydroxyestrone 3-O-(beta-D-glucuronate) + UDP + H(+). It carries out the reaction 2-hydroxy-17beta-estradiol + UDP-alpha-D-glucuronate = 2-hydroxy-17beta-estradiol 3-O-(beta-D-glucuronate) + UDP + H(+). The enzyme catalyses 2-methoxy-17beta-estradiol + UDP-alpha-D-glucuronate = 2-methoxy-17beta-estradiol 3-O-(beta-D-glucuronate) + UDP + H(+). The catalysed reaction is 17alpha-estradiol + UDP-alpha-D-glucuronate = 17alpha-estradiol 3-O-(beta-D-glucuronate) + UDP + H(+). It catalyses the reaction 16beta,17beta-estriol + UDP-alpha-D-glucuronate = 16beta,17beta-estriol 16-O-(beta-D-glucuronate) + UDP + H(+). It carries out the reaction losartan + UDP-alpha-D-glucuronate = losartan-2-N-beta-D-glucuronide + UDP. The enzyme catalyses prunetin + UDP-alpha-D-glucuronate = prunetin-4'-O-beta-D-glucuronide + UDP. The catalysed reaction is SN-38 + UDP-alpha-D-glucuronate = SN-38 O-beta-D-glucuronide + UDP + H(+). It catalyses the reaction (4Z,15Z)-bilirubin IXalpha + UDP-alpha-D-glucuronate = (4Z,15Z)-bilirubin IXalpha C12-beta-D-glucuronoside + UDP. It carries out the reaction (4Z,15Z)-bilirubin IXalpha + UDP-alpha-D-glucuronate = (4Z,15Z)-bilirubin IXalpha C8-beta-D-glucuronoside + UDP. The enzyme catalyses (4Z,15Z)-bilirubin IXalpha C8-beta-D-glucuronoside + UDP-alpha-D-glucuronate = (4Z,15Z)-bilirubin IXalpha C8,C12-beta-D-bisglucuronoside + UDP. The catalysed reaction is (4Z,15Z)-bilirubin IXalpha C12-beta-D-glucuronoside + UDP-alpha-D-glucuronate = (4Z,15Z)-bilirubin IXalpha C8,C12-beta-D-bisglucuronoside + UDP. It catalyses the reaction 8-iso-prostaglandin F2alpha + UDP-alpha-D-glucuronate = 8-iso-prostaglandin F2alpha-glucuronide + UDP + H(+). It carries out the reaction (5Z,8Z,11Z,14Z)-eicosatetraenoate + UDP-alpha-D-glucuronate = O-[(5Z),(8Z),(11Z),(14Z)-eicosatetraenoyl]-beta-D-glucuronate + UDP. The enzyme catalyses 15-hydroxy-(5Z,8Z,11Z,13E)-eicosatetraenoate + UDP-alpha-D-glucuronate = 15-O-(beta-D-glucuronosyl)-(5Z,8Z,11Z,14Z)-eicosatetraenoate + UDP + H(+). The catalysed reaction is 20-hydroxy-(5Z,8Z,11Z,14Z)-eicosatetraenoate + UDP-alpha-D-glucuronate = 20-O-(beta-D-glucuronosyl)-(5Z,8Z,11Z,14Z)-eicosatetraenoate + UDP + H(+). It catalyses the reaction prostaglandin B1 + UDP-alpha-D-glucuronate = 15-O-(beta-D-glucuronosyl)-prostaglandin B1 + UDP + H(+). It carries out the reaction (E)-ferulate + UDP-alpha-D-glucuronate = (E)-4-O-(beta-D-glucuronosyl)-ferulate + UDP + H(+). The enzyme catalyses (E)-ferulate + UDP-alpha-D-glucuronate = (E)-ferulic acid beta-D-glucuronate ester + UDP. In terms of biological role, UDP-glucuronosyltransferase (UGT) that catalyzes phase II biotransformation reactions in which lipophilic substrates are conjugated with glucuronic acid to increase the metabolite's water solubility, thereby facilitating excretion into either the urine or bile. Essential for the elimination and detoxification of drugs, xenobiotics and endogenous compounds. Catalyzes the glucuronidation of endogenous estrogen hormones such as estradiol, estrone and estriol. Involved in the glucuronidation of bilirubin, a degradation product occurring in the normal catabolic pathway that breaks down heme in vertebrates. Involved in the glucuronidation of arachidonic acid (AA) and AA-derived eicosanoids including 15-HETE, 20-HETE, PGB1 and F2-isoprostane (8-iso-PGF2alpha). Involved in the glucuronidation of the phytochemical ferulic acid at the phenolic or the carboxylic acid group. Also catalyzes the glucuronidation the isoflavones genistein, daidzein, glycitein, formononetin, biochanin A and prunetin, which are phytoestrogens with anticancer and cardiovascular properties. Involved in the glucuronidation of the AGTR1 angiotensin receptor antagonist losartan, a drug which can inhibit the effect of angiotensin II. Involved in the biotransformation of 7-ethyl-10-hydroxycamptothecin (SN-38), the pharmacologically active metabolite of the anticancer drug irinotecan. Its function is as follows. Lacks UGT glucuronidation activity but acts as a negative regulator of isoform 1. This chain is UDP-glucuronosyltransferase 1A1, found in Homo sapiens (Human).